Consider the following 217-residue polypeptide: Snake venom metalloproteinase lebetase-4 (217 aa).

A propeptide spanning residues Ser1–Glu14 is cleaved from the precursor. Gln15 bears the Pyrrolidone carboxylic acid mark. The 197-residue stretch at Arg21 to Pro217 folds into the Peptidase M12B domain. Ca(2+)-binding residues include Glu24 and Asp108. Disulfide bonds link Cys132/Cys212, Cys172/Cys196, and Cys174/Cys179. His157 is a binding site for Zn(2+). Glu158 is an active-site residue. 2 residues coordinate Zn(2+): His161 and His167. Positions 212 and 215 each coordinate Ca(2+).

The protein belongs to the venom metalloproteinase (M12B) family. P-I subfamily. As to quaternary structure, monomer. Zn(2+) serves as cofactor. Expressed by the venom gland.

The protein localises to the secreted. Fibrinolytic and caseinolytic activities are inhibited by Cd(2+), Cu(2+) and Co(2+) ions. Not inhibited by Mg(2+), Ca(2+) and Ba(2+). Also inhibited by EDTA, EGTA and 1,10-phenanthroline. Snake venom zinc metalloprotease that hydrolyzes the Aalpha-chain and more slowly the Bbeta-chain of fibrin and fibrinogen. Also hydrolyzes casein and B-chain of oxidized insulin. Its fibrinolytic activity is direct, without any plasminogen activation. Inhibits ADP-induced and collagen-induced platelet aggregation. Shows low hemorrhagic activity. Cleaves the plasma proteinase inhibitors alpha(2)-macroglobulin (A2M) and alpha(2)M-related pregnancy zone protein (PZP), and is inhibited by them. The sequence is that of Snake venom metalloproteinase lebetase-4 from Macrovipera lebetinus (Levantine viper).